Consider the following 470-residue polypeptide: UDP-N-acetylmuramate--L-alanine ligase (470 aa).

118–124 (GTHGKTT) is a binding site for ATP.

The protein belongs to the MurCDEF family.

The protein resides in the cytoplasm. The catalysed reaction is UDP-N-acetyl-alpha-D-muramate + L-alanine + ATP = UDP-N-acetyl-alpha-D-muramoyl-L-alanine + ADP + phosphate + H(+). Its pathway is cell wall biogenesis; peptidoglycan biosynthesis. Functionally, cell wall formation. This is UDP-N-acetylmuramate--L-alanine ligase from Cereibacter sphaeroides (strain KD131 / KCTC 12085) (Rhodobacter sphaeroides).